The following is a 479-amino-acid chain: BRAP2 RING ZnF UBP domain-containing protein 2 (479 aa).

An RING-type; atypical zinc finger spans residues 167–207; sequence CPVCLERLDQDTGGILTTMCNHSFHCSCISNWPDSSCPVCR. A UBP-type; degenerate zinc finger spans residues 201–294; it reads SSCPVCRYCQ…GKLVELNSHG (94 aa). Positions 218, 221, 230, 233, 238, 245, 249, and 255 each coordinate Zn(2+). Residues 328–442 are a coiled coil; the sequence is NELLQAQLEN…MAQMDGESEV (115 aa). A disordered region spans residues 434–479; sequence AQMDGESEVSETKEVQDATVSTTNTSSSGAGNVIHANKKKSNRRKG. Residues 451-466 are compositionally biased toward low complexity; it reads ATVSTTNTSSSGAGNV. A compositionally biased stretch (basic residues) spans 469–479; it reads ANKKKSNRRKG.

In terms of assembly, component of the heteromeric E3 ligase complex made of BRIZ1 and BRIZ2. Forms heterooligomers with BRIZ1 via coiled-coil domains.

It carries out the reaction S-ubiquitinyl-[E2 ubiquitin-conjugating enzyme]-L-cysteine + [acceptor protein]-L-lysine = [E2 ubiquitin-conjugating enzyme]-L-cysteine + N(6)-ubiquitinyl-[acceptor protein]-L-lysine.. Its pathway is protein modification; protein ubiquitination. RING-type ubiquitin E3 ligase that binds ubiquitin and is required for seed germination and post-germination growth. The polypeptide is BRAP2 RING ZnF UBP domain-containing protein 2 (Arabidopsis thaliana (Mouse-ear cress)).